Reading from the N-terminus, the 474-residue chain is Putative pectinesterase/pectinesterase inhibitor 38 (474 aa).

Residues 1-130 (MVFGNEMCDE…HSLESITIDV (130 aa)) form a pectinesterase inhibitor 38 region. An N-linked (GlcNAc...) asparagine glycan is attached at N80. Residues 164-461 (DVVVAQDGSG…TLPKFIDSAS (298 aa)) are pectinesterase 38. T241 and Q271 together coordinate substrate. D294 serves as the catalytic Proton donor; for pectinesterase activity. A disulfide bridge connects residues C308 and C328. The Nucleophile; for pectinesterase activity role is filled by D315. N-linked (GlcNAc...) asparagine glycosylation occurs at N351. Residues R380 and W382 each coordinate substrate. An N-linked (GlcNAc...) asparagine glycan is attached at N409.

This sequence in the N-terminal section; belongs to the PMEI family. The protein in the C-terminal section; belongs to the pectinesterase family.

The protein localises to the secreted. The protein resides in the cell wall. The enzyme catalyses [(1-&gt;4)-alpha-D-galacturonosyl methyl ester](n) + n H2O = [(1-&gt;4)-alpha-D-galacturonosyl](n) + n methanol + n H(+). It functions in the pathway glycan metabolism; pectin degradation; 2-dehydro-3-deoxy-D-gluconate from pectin: step 1/5. Functionally, acts in the modification of cell walls via demethylesterification of cell wall pectin. The protein is Putative pectinesterase/pectinesterase inhibitor 38 (PME38) of Arabidopsis thaliana (Mouse-ear cress).